The chain runs to 61 residues: Small ribosomal subunit protein uS14 (61 aa).

C24, C27, C40, and C43 together coordinate Zn(2+).

The protein belongs to the universal ribosomal protein uS14 family. Zinc-binding uS14 subfamily. As to quaternary structure, part of the 30S ribosomal subunit. Contacts proteins S3 and S10. The cofactor is Zn(2+).

Functionally, binds 16S rRNA, required for the assembly of 30S particles and may also be responsible for determining the conformation of the 16S rRNA at the A site. The chain is Small ribosomal subunit protein uS14 from Nitratidesulfovibrio vulgaris (strain ATCC 29579 / DSM 644 / CCUG 34227 / NCIMB 8303 / VKM B-1760 / Hildenborough) (Desulfovibrio vulgaris).